The following is a 169-amino-acid chain: Lutropin/choriogonadotropin subunit beta (169 aa).

A signal peptide spans 1-20 (MEMLQGLLLWMLLSVGGVWA). 6 cysteine pairs are disulfide-bonded: C29–C77, C43–C92, C46–C130, C54–C108, C58–C110, and C113–C120. N-linked (GlcNAc...) asparagine glycosylation occurs at N33. The tract at residues 131–169 (APQASSSSKDPPSQPLTSTSTPTPGASNRSSHPLPIKTS) is disordered. Residues 145 to 154 (PLTSTSTPTP) show a composition bias toward low complexity. Over residues 155–169 (GASNRSSHPLPIKTS) the composition is skewed to polar residues. N158 carries an N-linked (GlcNAc...) asparagine glycan.

It belongs to the glycoprotein hormones subunit beta family. As to quaternary structure, heterodimer of a common alpha chain and a unique beta chain which confers biological specificity to thyrotropin, lutropin, follitropin and gonadotropin.

The protein localises to the secreted. In terms of biological role, promotes spermatogenesis and ovulation by stimulating the testes and ovaries to synthesize steroids. This chain is Lutropin/choriogonadotropin subunit beta (LHB), found in Equus quagga burchellii (Burchell's zebra).